Here is a 623-residue protein sequence, read N- to C-terminus: Transketolase (623 aa).

Residue methionine 1 is modified to N-acetylmethionine. N6-acetyllysine is present on residues lysine 6 and lysine 11. Histidine 37 serves as a coordination point for substrate. 2 residues coordinate thiamine diphosphate: serine 40 and histidine 77. The residue at position 104 (serine 104) is a Phosphoserine. 123 to 125 (GSL) provides a ligand contact to thiamine diphosphate. Residue lysine 144 is modified to N6-acetyllysine. Position 155 (aspartate 155) interacts with Mg(2+). Residues glycine 156 and asparagine 185 each contribute to the thiamine diphosphate site. Positions 185 and 187 each coordinate Mg(2+). Residues lysine 204, lysine 232, and lysine 241 each carry the N6-acetyllysine modification. Thiamine diphosphate contacts are provided by lysine 244 and histidine 258. Histidine 258 contacts substrate. Lysine 260 is subject to N6-acetyllysine. Position 275 is a phosphotyrosine (tyrosine 275). At threonine 287 the chain carries Phosphothreonine. Serine 295 carries the post-translational modification Phosphoserine. Substrate contacts are provided by arginine 318 and serine 345. Residue serine 345 is modified to Phosphoserine. A Glycyl lysine isopeptide (Lys-Gly) (interchain with G-Cter in SUMO2) cross-link involves residue lysine 352. Catalysis depends on glutamate 366, which acts as the Proton donor. Phenylalanine 392 is a thiamine diphosphate binding site. Substrate contacts are provided by histidine 416 and aspartate 424. Residue glutamine 428 participates in thiamine diphosphate binding. Arginine 474 is a substrate binding site. N6-acetyllysine occurs at positions 538 and 603.

The protein belongs to the transketolase family. In terms of assembly, homodimer. It depends on Mg(2+) as a cofactor. Ca(2+) serves as cofactor. Requires Mn(2+) as cofactor. The cofactor is Co(2+). Thiamine diphosphate is required as a cofactor.

It carries out the reaction D-sedoheptulose 7-phosphate + D-glyceraldehyde 3-phosphate = aldehydo-D-ribose 5-phosphate + D-xylulose 5-phosphate. Functionally, catalyzes the transfer of a two-carbon ketol group from a ketose donor to an aldose acceptor, via a covalent intermediate with the cofactor thiamine pyrophosphate. In Rattus norvegicus (Rat), this protein is Transketolase (Tkt).